The primary structure comprises 223 residues: Ribose-5-phosphate isomerase A (223 aa).

Substrate-binding positions include 32–35, 85–88, and 98–101; these read TGST, DGAD, and KGGG. The active-site Proton acceptor is E107. K125 serves as a coordination point for substrate.

The protein belongs to the ribose 5-phosphate isomerase family. In terms of assembly, homodimer.

The catalysed reaction is aldehydo-D-ribose 5-phosphate = D-ribulose 5-phosphate. Its pathway is carbohydrate degradation; pentose phosphate pathway; D-ribose 5-phosphate from D-ribulose 5-phosphate (non-oxidative stage): step 1/1. Its function is as follows. Catalyzes the reversible conversion of ribose-5-phosphate to ribulose 5-phosphate. The protein is Ribose-5-phosphate isomerase A of Pseudomonas syringae pv. syringae (strain B728a).